The chain runs to 235 residues: Pyridoxine 5'-phosphate synthase (235 aa).

Asn-6 is a binding site for 3-amino-2-oxopropyl phosphate. Asp-8 to His-9 contacts 1-deoxy-D-xylulose 5-phosphate. Residue Arg-17 participates in 3-amino-2-oxopropyl phosphate binding. The active-site Proton acceptor is His-42. The 1-deoxy-D-xylulose 5-phosphate site is built by Arg-44 and His-49. The active-site Proton acceptor is Glu-69. Residue Thr-99 coordinates 1-deoxy-D-xylulose 5-phosphate. His-189 serves as the catalytic Proton donor. 3-amino-2-oxopropyl phosphate-binding positions include Gly-190 and Gly-211–His-212.

Belongs to the PNP synthase family. In terms of assembly, homooctamer; tetramer of dimers.

It localises to the cytoplasm. It carries out the reaction 3-amino-2-oxopropyl phosphate + 1-deoxy-D-xylulose 5-phosphate = pyridoxine 5'-phosphate + phosphate + 2 H2O + H(+). It functions in the pathway cofactor biosynthesis; pyridoxine 5'-phosphate biosynthesis; pyridoxine 5'-phosphate from D-erythrose 4-phosphate: step 5/5. Functionally, catalyzes the complicated ring closure reaction between the two acyclic compounds 1-deoxy-D-xylulose-5-phosphate (DXP) and 3-amino-2-oxopropyl phosphate (1-amino-acetone-3-phosphate or AAP) to form pyridoxine 5'-phosphate (PNP) and inorganic phosphate. The sequence is that of Pyridoxine 5'-phosphate synthase from Chlorobium phaeovibrioides (strain DSM 265 / 1930) (Prosthecochloris vibrioformis (strain DSM 265)).